A 550-amino-acid chain; its full sequence is Hydroxylamine reductase (550 aa).

Residues Cys-3, Cys-6, Cys-18, and Cys-25 each coordinate [2Fe-2S] cluster. Positions 249, 273, 317, 405, 433, 458, 492, and 494 each coordinate hybrid [4Fe-2O-2S] cluster. Cys-405 bears the Cysteine persulfide mark.

Belongs to the HCP family. [2Fe-2S] cluster is required as a cofactor. Hybrid [4Fe-2O-2S] cluster serves as cofactor.

The protein resides in the cytoplasm. The catalysed reaction is A + NH4(+) + H2O = hydroxylamine + AH2 + H(+). In terms of biological role, catalyzes the reduction of hydroxylamine to form NH(3) and H(2)O. This chain is Hydroxylamine reductase, found in Escherichia fergusonii (strain ATCC 35469 / DSM 13698 / CCUG 18766 / IAM 14443 / JCM 21226 / LMG 7866 / NBRC 102419 / NCTC 12128 / CDC 0568-73).